The following is a 423-amino-acid chain: Replication factor C large subunit (423 aa).

63–70 contacts ATP; that stretch reads GPPGIGKT.

It belongs to the activator 1 small subunits family. RfcL subfamily. As to quaternary structure, heteromultimer composed of small subunits (RfcS) and large subunits (RfcL).

Functionally, part of the RFC clamp loader complex which loads the PCNA sliding clamp onto DNA. The protein is Replication factor C large subunit of Pyrobaculum islandicum (strain DSM 4184 / JCM 9189 / GEO3).